A 294-amino-acid polypeptide reads, in one-letter code: uncharacterized protein (294 aa).

The first 16 residues, 1–16 (MQNFMVLLLLIVAVVA), serve as a signal peptide directing secretion. Residues Asn25 and Asn162 are each glycosylated (N-linked (GlcNAc...) asparagine; by host).

This is an uncharacterized protein from Acheta domesticus (House cricket).